The primary structure comprises 132 residues: Global transcriptional regulator Spx (132 aa).

A disulfide bridge links Cys10 with Cys13.

It belongs to the ArsC family. Spx subfamily. As to quaternary structure, interacts with the C-terminal domain of the alpha subunit of the RNAP.

The protein localises to the cytoplasm. Global transcriptional regulator that plays a key role in stress response and exerts either positive or negative regulation of genes. Acts by interacting with the C-terminal domain of the alpha subunit of the RNA polymerase (RNAP). This interaction can enhance binding of RNAP to the promoter region of target genes and stimulate their transcription, or block interaction of RNAP with activator. The polypeptide is Global transcriptional regulator Spx (Lactiplantibacillus plantarum (strain ATCC BAA-793 / NCIMB 8826 / WCFS1) (Lactobacillus plantarum)).